Consider the following 255-residue polypeptide: Ribonuclease HII (255 aa).

Residues Ala-72–Leu-255 form the RNase H type-2 domain. 3 residues coordinate a divalent metal cation: Asp-78, Glu-79, and Asp-170.

The protein belongs to the RNase HII family. The cofactor is Mn(2+). Mg(2+) is required as a cofactor.

It localises to the cytoplasm. It carries out the reaction Endonucleolytic cleavage to 5'-phosphomonoester.. In terms of biological role, endonuclease that specifically degrades the RNA of RNA-DNA hybrids. The polypeptide is Ribonuclease HII (Staphylococcus aureus (strain USA300)).